The chain runs to 344 residues: Anthranilate phosphoribosyltransferase (344 aa).

Residues Gly-79, 82–83, Thr-87, 89–92, 107–115, and Ser-119 each bind 5-phospho-alpha-D-ribose 1-diphosphate; these read GD, NIST, and KHGNRSVSS. Gly-79 contributes to the anthranilate binding site. Ser-91 is a binding site for Mg(2+). Asn-110 serves as a coordination point for anthranilate. Arg-165 contacts anthranilate. Residues Asp-224 and Glu-225 each coordinate Mg(2+).

Belongs to the anthranilate phosphoribosyltransferase family. In terms of assembly, homodimer. Requires Mg(2+) as cofactor.

It carries out the reaction N-(5-phospho-beta-D-ribosyl)anthranilate + diphosphate = 5-phospho-alpha-D-ribose 1-diphosphate + anthranilate. The protein operates within amino-acid biosynthesis; L-tryptophan biosynthesis; L-tryptophan from chorismate: step 2/5. Its function is as follows. Catalyzes the transfer of the phosphoribosyl group of 5-phosphorylribose-1-pyrophosphate (PRPP) to anthranilate to yield N-(5'-phosphoribosyl)-anthranilate (PRA). This chain is Anthranilate phosphoribosyltransferase, found in Salinibacter ruber (strain DSM 13855 / M31).